Here is a 298-residue protein sequence, read N- to C-terminus: GTPase Era (298 aa).

One can recognise an Era-type G domain in the interval 3–170 (KSGFVAILGR…VQLLKDNLEE (168 aa)). Residues 11-18 (GRPNVGKS) form a G1 region. A GTP-binding site is contributed by 11–18 (GRPNVGKS). Positions 37–41 (QTTRN) are G2. The segment at 58-61 (DTPG) is G3. Residues 58-62 (DTPGI) and 120-123 (NKID) contribute to the GTP site. The G4 stretch occupies residues 120-123 (NKID). Residues 149 to 151 (ISA) are G5. In terms of domain architecture, KH type-2 spans 201–279 (TQQEVPHSVA…YLETWVKVKK (79 aa)).

This sequence belongs to the TRAFAC class TrmE-Era-EngA-EngB-Septin-like GTPase superfamily. Era GTPase family. Monomer.

It localises to the cytoplasm. The protein resides in the cell membrane. In terms of biological role, an essential GTPase that binds both GDP and GTP, with rapid nucleotide exchange. Plays a role in 16S rRNA processing and 30S ribosomal subunit biogenesis and possibly also in cell cycle regulation and energy metabolism. In Streptococcus equi subsp. zooepidemicus (strain MGCS10565), this protein is GTPase Era.